A 307-amino-acid chain; its full sequence is Small ribosomal subunit biogenesis GTPase RsgA (307 aa).

Residues 1 to 21 form a disordered region; it reads MPSEHPFSDGIPTPNPKETMN. Positions 85–242 constitute a CP-type G domain; the sequence is RQDAWKTKLI…LIDSPGLQEF (158 aa). Residues 135–138 and 184–192 each bind GTP; these read NKAD and GQSGMGKST. 4 residues coordinate Zn(2+): C266, C271, H273, and C279.

It belongs to the TRAFAC class YlqF/YawG GTPase family. RsgA subfamily. Monomer. Associates with 30S ribosomal subunit, binds 16S rRNA. Requires Zn(2+) as cofactor.

It localises to the cytoplasm. In terms of biological role, one of several proteins that assist in the late maturation steps of the functional core of the 30S ribosomal subunit. Helps release RbfA from mature subunits. May play a role in the assembly of ribosomal proteins into the subunit. Circularly permuted GTPase that catalyzes slow GTP hydrolysis, GTPase activity is stimulated by the 30S ribosomal subunit. The polypeptide is Small ribosomal subunit biogenesis GTPase RsgA (Neisseria meningitidis serogroup B (strain ATCC BAA-335 / MC58)).